Here is a 487-residue protein sequence, read N- to C-terminus: 3-ketoacyl-CoA synthase 17 (487 aa).

Helical transmembrane passes span 23 to 43 (LITHFFKLMFLPLMAVLFMNV) and 57 to 77 (STGFIFVITLAIVGSIVFFMS). The region spanning 74-363 (FFMSRPRSIY…FFATFVAKRL (290 aa)) is the FAE domain. Catalysis depends on residues C218, H297, H382, H386, H415, and N419.

The protein belongs to the thiolase-like superfamily. Chalcone/stilbene synthases family. In terms of tissue distribution, expressed in flowers.

Its subcellular location is the membrane. The enzyme catalyses a very-long-chain acyl-CoA + malonyl-CoA + H(+) = a very-long-chain 3-oxoacyl-CoA + CO2 + CoA. It participates in lipid metabolism; fatty acid biosynthesis. With respect to regulation, inhibited by K3 herbicides such as alachlor, allidochlor, anilofos, cafenstrole, fentrazamide and flufenacet. Strongly inhibited by metazachlor. Active on saturated acyl-CoAs up to C22. Mediates the synthesis of VLCFAs from 20 to 26 carbons in length (e.g. C20:1, C20, C24, C26). The sequence is that of 3-ketoacyl-CoA synthase 17 from Arabidopsis thaliana (Mouse-ear cress).